Consider the following 454-residue polypeptide: Flavonoid 3-O-glucosyltransferase (454 aa).

Threonine 25 lines the UDP pocket. The active-site Proton acceptor is histidine 26. Arginine 89 contributes to the myricetin binding site. Aspartate 124 acts as the Charge relay in catalysis. Myricetin contacts are provided by histidine 155, glutamate 192, and phenylalanine 202. 4 residues coordinate UDP: serine 282, serine 308, tryptophan 334, and alanine 335. UDP-alpha-D-glucose-binding residues include alanine 335, glutamine 337, histidine 352, tryptophan 355, asparagine 356, serine 357, and glutamate 360. Histidine 352 contacts UDP. Residues asparagine 356, serine 357, and glutamate 360 each coordinate UDP. A myricetin-binding site is contributed by glycine 375. Aspartate 376 and glutamine 377 together coordinate UDP-alpha-D-glucose.

Belongs to the UDP-glycosyltransferase family. As to expression, highly expressed in flower buds, flowers and pods. Lower expression in leaves, petioles and stems.

It functions in the pathway secondary metabolite biosynthesis; flavonoid biosynthesis. Functionally, catalyzes the glycosylation of flavonoids at the 3-O-position. Glycosylates the 7-O-position if the 3-O-position is not available. Also able to perform 3-O-glycosylation of anthocyanidins. This is Flavonoid 3-O-glucosyltransferase (UGT78G1) from Medicago truncatula (Barrel medic).